We begin with the raw amino-acid sequence, 264 residues long: Thymidylate synthase (264 aa).

Residue R21 participates in dUMP binding. H51 is a binding site for (6R)-5,10-methylene-5,6,7,8-tetrahydrofolate. DUMP is bound at residue 126–127 (RR). C146 serves as the catalytic Nucleophile. DUMP contacts are provided by residues 166 to 169 (RSAD), N177, and 207 to 209 (HLY). D169 lines the (6R)-5,10-methylene-5,6,7,8-tetrahydrofolate pocket. Position 263 (S263) interacts with (6R)-5,10-methylene-5,6,7,8-tetrahydrofolate.

It belongs to the thymidylate synthase family. Bacterial-type ThyA subfamily. Homodimer.

Its subcellular location is the cytoplasm. The catalysed reaction is dUMP + (6R)-5,10-methylene-5,6,7,8-tetrahydrofolate = 7,8-dihydrofolate + dTMP. The protein operates within pyrimidine metabolism; dTTP biosynthesis. Functionally, catalyzes the reductive methylation of 2'-deoxyuridine-5'-monophosphate (dUMP) to 2'-deoxythymidine-5'-monophosphate (dTMP) while utilizing 5,10-methylenetetrahydrofolate (mTHF) as the methyl donor and reductant in the reaction, yielding dihydrofolate (DHF) as a by-product. This enzymatic reaction provides an intracellular de novo source of dTMP, an essential precursor for DNA biosynthesis. The sequence is that of Thymidylate synthase from Neisseria meningitidis serogroup A / serotype 4A (strain DSM 15465 / Z2491).